A 124-amino-acid chain; its full sequence is Large ribosomal subunit protein bL12c (124 aa).

The protein belongs to the bacterial ribosomal protein bL12 family. Homodimer. Part of the ribosomal stalk of the 50S ribosomal subunit. Forms a multimeric L10(L12)X complex, where L10 forms an elongated spine to which 2 to 4 L12 dimers bind in a sequential fashion. Binds GTP-bound translation factors.

The protein localises to the plastid. The protein resides in the chloroplast. Its function is as follows. Forms part of the ribosomal stalk which helps the ribosome interact with GTP-bound translation factors. Is thus essential for accurate translation. The polypeptide is Large ribosomal subunit protein bL12c (Cyanidioschyzon merolae (strain NIES-3377 / 10D) (Unicellular red alga)).